Here is a 361-residue protein sequence, read N- to C-terminus: Putative geranylgeranyl pyrophosphate synthase 8, chloroplastic (361 aa).

A chloroplast-targeting transit peptide spans 1-39 (MATTVHLSSFSLFIQSRGRRDNSISSVKSLKKRTGLSPS). The segment at 24–58 (ISSVKSLKKRTGLSPSSALTSQGGRDMIPPQGKSN) is disordered. Positions 36–46 (LSPSSALTSQG) are enriched in polar residues. Isopentenyl diphosphate-binding residues include Lys107, Arg110, and His139. The Mg(2+) site is built by Asp146 and Asp152. Arg157 is a dimethylallyl diphosphate binding site. Arg158 is a binding site for isopentenyl diphosphate. Positions 246, 247, 284, 301, and 311 each coordinate dimethylallyl diphosphate.

Belongs to the FPP/GGPP synthase family. Monomer. Requires Mg(2+) as cofactor.

Its subcellular location is the plastid. It is found in the chloroplast. The enzyme catalyses isopentenyl diphosphate + dimethylallyl diphosphate = (2E)-geranyl diphosphate + diphosphate. The catalysed reaction is isopentenyl diphosphate + (2E)-geranyl diphosphate = (2E,6E)-farnesyl diphosphate + diphosphate. It catalyses the reaction isopentenyl diphosphate + (2E,6E)-farnesyl diphosphate = (2E,6E,10E)-geranylgeranyl diphosphate + diphosphate. The protein operates within isoprenoid biosynthesis; farnesyl diphosphate biosynthesis; farnesyl diphosphate from geranyl diphosphate and isopentenyl diphosphate: step 1/1. Its pathway is isoprenoid biosynthesis; geranyl diphosphate biosynthesis; geranyl diphosphate from dimethylallyl diphosphate and isopentenyl diphosphate: step 1/1. It functions in the pathway isoprenoid biosynthesis; geranylgeranyl diphosphate biosynthesis; geranylgeranyl diphosphate from farnesyl diphosphate and isopentenyl diphosphate: step 1/1. Functionally, catalyzes the trans-addition of the three molecules of IPP onto DMAPP to form geranylgeranyl pyrophosphate. This Arabidopsis thaliana (Mouse-ear cress) protein is Putative geranylgeranyl pyrophosphate synthase 8, chloroplastic.